A 122-amino-acid chain; its full sequence is Protein C10 (122 aa).

This sequence belongs to the UPF0456 family.

It is found in the cytoplasm. The sequence is that of Protein C10 from Danio rerio (Zebrafish).